A 501-amino-acid polypeptide reads, in one-letter code: Protein YLS7 (501 aa).

Residues 25–45 (IAFAIGGLTSFVIFASLLLFT) form a helical; Signal-anchor for type II membrane protein membrane-spanning segment. The segment at 69 to 131 (HSIHDPDRNP…NVSIDEEATQ (63 aa)) is disordered. Residues 78–89 (PSPVSSSESPPV) show a composition bias toward low complexity. The segment covering 94 to 113 (SDDKVLPKGSHDSNDVRLGE) has biased composition (basic and acidic residues). Over residues 114-124 (ETNSGKSSNVS) the composition is skewed to polar residues. The GDS motif signature appears at 211–213 (GDS). The disordered stretch occupies residues 438–467 (RHDGHPGPYRSPDPKKITKRGPDGQPPPQD). Positions 449 to 459 (PDPKKITKRGP) are enriched in basic and acidic residues. The DCXHWCLPGXXDXWN motif signature appears at 467–481 (DCLHWCMPGPVDTWN).

The protein belongs to the PC-esterase family. TBL subfamily. In terms of tissue distribution, expressed in roots, cauline leaves and flowers.

The protein localises to the membrane. Its function is as follows. May act as a bridging protein that binds pectin and other cell wall polysaccharides. Probably involved in maintaining esterification of pectins. May be involved in the specific O-acetylation of cell wall polymers. In Arabidopsis thaliana (Mouse-ear cress), this protein is Protein YLS7 (YLS7).